The sequence spans 1957 residues: [F-actin]-monooxygenase MICAL2 (1957 aa).

The tract at residues 2–494 is monooxygenase domain; sequence GENEDEKQAQ…KHLYITKELE (493 aa). FAD is bound by residues Cys-97, 116-118, 123-125, Phe-183, Tyr-298, and Asp-398; these read EKR and RNN. The 104-residue stretch at 516 to 619 folds into the Calponin-homology (CH) domain; it reads DIRPSKLLTW…MVMYLSKFYE (104 aa). At Ser-631 the chain carries Phosphoserine. A Nuclear localization signal motif is present at residues 660-681; the sequence is RKRTPRVDGQTGENDMNKRRRK. 2 disordered regions span residues 660-714 and 886-942; these read RKRT…NQNK and QNKL…HPSH. The span at 687–714 shows a compositional bias: polar residues; that stretch reads DEPSNFSSRSLGSNQECGSSKEGGNQNK. The span at 899 to 910 shows a compositional bias: pro residues; that stretch reads PPSPPSRLPSPD. The span at 911 to 925 shows a compositional bias: low complexity; sequence PAASSSPSTVDSASP. An LIM zinc-binding domain is found at 1000-1062; that stretch reads DTCYFCKKRV…KPHFIHCKTN (63 aa). Residues Cys-1002, Cys-1005, His-1023, Cys-1026, Cys-1029, Cys-1032, Cys-1052, and His-1055 each contribute to the Zn(2+) site. Disordered stretches follow at residues 1070–1143, 1168–1243, 1258–1345, 1361–1431, 1467–1626, and 1675–1779; these read AELK…PSEW, SEDS…TPSK, VNKR…LYLP, GEDG…EGGP, KAGE…SPPC, and ESRQ…KEKK. Residues 1185-1195 show a composition bias toward basic and acidic residues; that stretch reads SHTEPCEEKPW. The segment covering 1232-1243 has biased composition (polar residues); that stretch reads RANSFQSPTPSK. Low complexity predominate over residues 1275-1294; that stretch reads LPSSSSHSSSPPSSSSTSVS. A compositionally biased stretch (polar residues) spans 1302–1316; sequence SPPQMTASEPLSQVS. The interaction with MAPK1 stretch occupies residues 1324-1363; it reads TPNFRRRAVAQGAPREIPLYLPHHPKPEWAEYCLVSPGED. Basic and acidic residues-rich tracts occupy residues 1388–1402 and 1413–1431; these read SNHRDPHPIWGKDRS and GEDREKGSTGARKEEEGGP. Low complexity predominate over residues 1485–1496; the sequence is VLKPVRPLLLPR. Residues 1552–1562 are compositionally biased toward basic and acidic residues; the sequence is GGKKAWAKQES. Residues 1570-1579 show a composition bias toward polar residues; that stretch reads CTRSFSLRKT. Position 1688 is a phosphoserine (Ser-1688). A compositionally biased stretch (pro residues) spans 1718-1733; sequence APPPPPPPPPPPPPPT. Residues 1751–1762 show a composition bias toward low complexity; the sequence is ASSSASSTSSSS. In terms of domain architecture, bMERB spans 1796–1945; the sequence is KQEELKRLYK…EKAEDQHFES (150 aa).

The protein belongs to the Mical family. As to quaternary structure, interacts with PLXNA4. Interacts with RAB1B. Interacts with MAPK1/ERK2. Interacts with RAB35, RAB8A, RAB10, RAB13 and RAB15 (in their GTP-bound forms); binding to RAB35 is of low affinity compared to other Rab proteins; at least in case of RAB8A may bind 2 molecules of RAB8A simultaneously through a high and a low affinity binding site, respectively. May interact with MAPK1/ERK2. Interacts with CORO1C; this interaction recruits MICAL2 to the actin filaments. FAD is required as a cofactor.

It localises to the nucleus. Its subcellular location is the cytoplasm. It carries out the reaction L-methionyl-[F-actin] + NADPH + O2 + H(+) = L-methionyl-(R)-S-oxide-[F-actin] + NADP(+) + H2O. Its activity is regulated as follows. Specifically inhibited by CCG-1423, a small molecule inhibitor of SRF:MKL1/MRTF-A-dependent transcription. Its function is as follows. Methionine monooxygenase that promotes depolymerization of F-actin by mediating oxidation of residues 'Met-44' and 'Met-47' on actin to form methionine-sulfoxide, resulting in actin filament disassembly and preventing repolymerization. Regulates the disassembly of branched actin networks also by oxidizing ARP3B-containing ARP2/3 complexes leading to ARP3B dissociation from the network. Acts as a key regulator of the SRF signaling pathway elicited by nerve growth factor and serum: mediates oxidation and subsequent depolymerization of nuclear actin, leading to increase MKL1/MRTF-A presence in the nucleus and promote SRF:MKL1/MRTF-A-dependent gene transcription. Does not activate SRF:MKL1/MRTF-A through RhoA. This chain is [F-actin]-monooxygenase MICAL2, found in Homo sapiens (Human).